Here is a 356-residue protein sequence, read N- to C-terminus: Alpha-N-acetylneuraminide alpha-2,8-sialyltransferase (356 aa).

At 1 to 29 the chain is on the cytoplasmic side; that stretch reads MSPCGRARRHTSRGAMAVLAWKFPRTRLP. The chain crosses the membrane as a helical; Signal-anchor for type II membrane protein span at residues 30-48; the sequence is VGASALCVVVLCWLYVFPV. The Lumenal portion of the chain corresponds to 49-356; sequence YRLPDEKEIV…CEDNSLQPTS (308 aa). N-linked (GlcNAc...) asparagine glycans are attached at residues Asn71 and Asn119. The cysteines at positions 138 and 287 are disulfide-linked. Residues Asn143 and Asn166 each contribute to the CMP-N-acetyl-beta-neuraminate site. 2 N-linked (GlcNAc...) asparagine glycosylation sites follow: Asn214 and Asn245. 5 residues coordinate CMP-N-acetyl-beta-neuraminate: Ser274, Thr275, Gly276, Trp296, and His310.

This sequence belongs to the glycosyltransferase 29 family.

The protein localises to the golgi apparatus membrane. The enzyme catalyses an N-acetyl-alpha-neuraminyl-(2-&gt;3)-beta-D-galactosyl derivative + CMP-N-acetyl-beta-neuraminate = an N-acetyl-alpha-neuraminyl-(2-&gt;8)-N-acetyl-alpha-neuraminyl-(2-&gt;3)-beta-D-galactosyl derivative + CMP + H(+). It carries out the reaction a ganglioside GM3 (d18:1(4E)) + CMP-N-acetyl-beta-neuraminate = a ganglioside GD3 (d18:1(4E)) + CMP + H(+). The catalysed reaction is a ganglioside GD3 (d18:1(4E)) + CMP-N-acetyl-beta-neuraminate = a ganglioside GT3 (d18:1(4E)) + CMP + H(+). It catalyses the reaction a ganglioside GD1a (d18:1(4E)) + CMP-N-acetyl-beta-neuraminate = a ganglioside GT1a (d18:1(4E)) + CMP + H(+). The enzyme catalyses a ganglioside GT1b (d18:1(4E)) + CMP-N-acetyl-beta-neuraminate = a ganglioside GQ1b (d18:1(4E)) + CMP + H(+). It carries out the reaction a ganglioside GM1b (d18:1(4E)) + CMP-N-acetyl-beta-neuraminate = a ganglioside GD1c (d18:1(4E)) + CMP + H(+). The catalysed reaction is a ganglioside GD3 + CMP-N-acetyl-beta-neuraminate = a ganglioside GT3 + CMP + H(+). It catalyses the reaction [alpha-N-acetylneuraminyl-(2-&gt;8)](n)-alpha-N-acetylneuraminyl-(2-&gt;8)-alpha-N-acetylneuraminyl-(2-&gt;3)-beta-D-galactosyl-(1-&gt;4)-beta-D-glucosyl-(1&lt;-&gt;1)-ceramide + CMP-N-acetyl-beta-neuraminate = [alpha-N-acetylneuraminyl-(2-&gt;8)](n+1)-alpha-N-acetylneuraminyl-(2-&gt;8)-alpha-N-acetylneuraminyl-(2-&gt;3)-beta-D-galactosyl-(1-&gt;4)-beta-D-glucosyl-(1&lt;-&gt;1)-ceramide + CMP + H(+). Its pathway is protein modification; protein glycosylation. It functions in the pathway lipid metabolism; sphingolipid metabolism. Its function is as follows. Catalyzes the addition of sialic acid in alpha 2,8-linkage to the sialic acid moiety of the ganglioside GM3 to form ganglioside GD3; gangliosides are a subfamily of complex glycosphingolipds that contain one or more residues of sialic acid. Can catalyze the addition of a second alpha-2,8- sialic acid to GD3 to form GT3. Can use GM1b, GD1a and GT1b as acceptor substrates to synthesize GD1c, GT1a and GQ1b respectively. The chain is Alpha-N-acetylneuraminide alpha-2,8-sialyltransferase from Bos taurus (Bovine).